A 494-amino-acid polypeptide reads, in one-letter code: Cobyric acid synthase (494 aa).

Residues 248-445 (ELEIAVLKLP…LHGIFDNGPW (198 aa)) enclose the GATase cobBQ-type domain. Residue Cys-329 is the Nucleophile of the active site. The active site involves His-437.

The protein belongs to the CobB/CobQ family. CobQ subfamily.

It functions in the pathway cofactor biosynthesis; adenosylcobalamin biosynthesis. Its function is as follows. Catalyzes amidations at positions B, D, E, and G on adenosylcobyrinic A,C-diamide. NH(2) groups are provided by glutamine, and one molecule of ATP is hydrogenolyzed for each amidation. In Synechococcus sp. (strain WH7803), this protein is Cobyric acid synthase.